Here is a 496-residue protein sequence, read N- to C-terminus: Matrilin-1 (496 aa).

The N-terminal stretch at 1–22 (MRVLSGTSLMLCSLLLLLQALC) is a signal peptide. Residues 23–222 (SPGLAPQSRG…SRKFQEAFCV (200 aa)) enclose the VWFA 1 domain. Asn76 carries an N-linked (GlcNAc...) asparagine glycan. The region spanning 223-263 (VSDLCATGDHDCEQVCISSPGSYTCACHEGFTLNSDGKTCN) is the EGF-like domain. 3 disulfide bridges follow: Cys227–Cys238, Cys234–Cys247, and Cys249–Cys262. The 190-residue stretch at 264 to 453 (VCSGGGGSSA…GKKLQKKICV (190 aa)) folds into the VWFA 2 domain. N-linked (GalNAc...) asparagine glycosylation occurs at Asn344. Residues 467 to 495 (QAKVEGLLQALTRKLEAVSKRLAILENTV) are a coiled coil.

In terms of assembly, homotrimer. Part of a complex composed of MATN1 (via VWFA1 domain), type 2 collagens and type 6 collagens. Forms a complex (via covalent bonds) with ACAN; the interaction increases in abundance with increasing age of the organism via an increase in occupancy of MATN1 binding sites. Interacts with COMP. Post-translationally, N-glycosylated; reduces binding affinity for type 2 collagens.

It localises to the secreted. It is found in the extracellular space. Its subcellular location is the extracellular matrix. In terms of biological role, a major component of the extracellular matrix of non-articular cartilage. Binds to type 2 collagens and forms long concatenated protein networks as part of the extracellular matrix. Required for the network-like organization and bundling of collagen fibrils surrounding chondrocytes in the zones of maturation and hypertrophy. Required for mechanotransduction and adaption to mechanical loading in cartilage chondrocytes, resulting in an increase in expression of the extracellular matrix components ACAN and COL2A1. Acts as a moderator of angiogenesis in response to injury. This chain is Matrilin-1, found in Homo sapiens (Human).